The following is a 447-amino-acid chain: MIRKTLGKLYVQVLIGVAAGIVQGVAAPNLGSDLKPLGDVFIKLIKMVFAPIIFATVTLGIARMENMKELGRVGVRALVYFEVLSTFALALGLIVVNLVQPGQGMNVDAAHLDTKAIASYTHAAARPQTFVDFLLSLVPSSIIDALARNDILQILVFATLFGIALSRMGTRARPVVDFLDVFTQGVFSIVGMIMRLAPIAAFGAMAFTVGKYGLGSIAALGKLMATMYLTCVLFVAIVLGGVARLAGFSLWKFLRYIRDEIFTVLGTSSSESVVPQLMRKLESAGVSKPVVGLVVPSGLTFNPDGQCIYYTMAAIFVAQATNTPLTLTDQLVVLGVLLLTSKGSAGVTGSGFITLAATLASLGKIPVAGMVLLLGIDRFMSEARAITNTIGNAVGTLAIARWVGAVDRERLQAALDGVPEAAQTPPQAVHVHAPVAHVEAAHPPLAH.

8 consecutive transmembrane segments (helical) span residues 5–27 (TLGK…GVAA), 42–64 (IKLI…IARM), 77–99 (ALVY…VNLV), 146–165 (LARN…GIAL), 186–208 (VFSI…MAFT), 223–245 (LMAT…VARL), 315–337 (IFVA…LGVL), and 352–374 (FITL…VLLL).

This sequence belongs to the dicarboxylate/amino acid:cation symporter (DAACS) (TC 2.A.23) family.

The protein resides in the cell inner membrane. Functionally, responsible for the transport of dicarboxylates such as succinate, fumarate, and malate from the periplasm across the membrane. In Ralstonia nicotianae (strain ATCC BAA-1114 / GMI1000) (Ralstonia solanacearum), this protein is C4-dicarboxylate transport protein 3 (dctA3).